A 156-amino-acid chain; its full sequence is MPRRRRIEPRKILPDPKFGSELLAKFINVLMVDGKKSIAESIVYNALETLAQRTGKDALESFEIALENVRPTVEVKSRRVGGSTYQVPVEVRPTRRNALGMRWIVEAARKRGDKSMALRLANELSDAVDNKGAAVKKREDVHRMAEANKAFAHFRW.

Belongs to the universal ribosomal protein uS7 family. As to quaternary structure, part of the 30S ribosomal subunit. Contacts proteins S9 and S11.

In terms of biological role, one of the primary rRNA binding proteins, it binds directly to 16S rRNA where it nucleates assembly of the head domain of the 30S subunit. Is located at the subunit interface close to the decoding center, probably blocks exit of the E-site tRNA. The protein is Small ribosomal subunit protein uS7 of Actinobacillus succinogenes (strain ATCC 55618 / DSM 22257 / CCUG 43843 / 130Z).